The sequence spans 212 residues: Regulatory protein RecX (212 aa).

Belongs to the RecX family.

Its subcellular location is the cytoplasm. In terms of biological role, modulates RecA activity. The sequence is that of Regulatory protein RecX from Clostridioides difficile (strain 630) (Peptoclostridium difficile).